A 486-amino-acid chain; its full sequence is E3 ubiquitin-protein ligase TRIM58 (486 aa).

An RING-type zinc finger spans residues 16–61 (CPVCLDFLQEPVSVDCGHSFCLRCISEFCEKSDGAQGGVYACPQCR). A B box-type zinc finger spans residues 91–132 (PGARRCARHGEDLSRFCEEDEAALCWVCDAGPEHRTHRTAPL). Positions 96, 99, 118, and 124 each coordinate Zn(2+). Residues 193-242 (LAQEEQRQLRRLEAEERATLQRLRESKSRLVQQSKALKELADELQERCQR) adopt a coiled-coil conformation. Residues 273–463 (LKTACCIPGR…TPLILPPTTI (191 aa)) form the B30.2/SPRY domain.

It belongs to the TRIM/RBCC family. Expressed in erythroblasts.

It carries out the reaction S-ubiquitinyl-[E2 ubiquitin-conjugating enzyme]-L-cysteine + [acceptor protein]-L-lysine = [E2 ubiquitin-conjugating enzyme]-L-cysteine + N(6)-ubiquitinyl-[acceptor protein]-L-lysine.. It participates in protein modification; protein ubiquitination. Functionally, E3 ubiquitin ligase induced during late erythropoiesis. Directly binds and ubiquitinates the intermediate chain of the microtubule motor dynein (DYNC1LI1/DYNC1LI2), stimulating the degradation of the dynein holoprotein complex. May participate in the erythroblast enucleation process through regulation of nuclear polarization. The protein is E3 ubiquitin-protein ligase TRIM58 (TRIM58) of Homo sapiens (Human).